We begin with the raw amino-acid sequence, 424 residues long: 3-phosphoshikimate 1-carboxyvinyltransferase (424 aa).

The 3-phosphoshikimate site is built by Lys21, Ser22, and Arg26. Lys21 contacts phosphoenolpyruvate. Residues Gly92 and Arg120 each coordinate phosphoenolpyruvate. The 3-phosphoshikimate site is built by Ser163, Ser164, Gln165, Ser191, Asp306, and Lys333. A phosphoenolpyruvate-binding site is contributed by Gln165. The Proton acceptor role is filled by Asp306. Phosphoenolpyruvate-binding residues include Arg337, Arg379, and Lys405.

This sequence belongs to the EPSP synthase family. In terms of assembly, monomer.

The protein resides in the cytoplasm. The enzyme catalyses 3-phosphoshikimate + phosphoenolpyruvate = 5-O-(1-carboxyvinyl)-3-phosphoshikimate + phosphate. It functions in the pathway metabolic intermediate biosynthesis; chorismate biosynthesis; chorismate from D-erythrose 4-phosphate and phosphoenolpyruvate: step 6/7. In terms of biological role, catalyzes the transfer of the enolpyruvyl moiety of phosphoenolpyruvate (PEP) to the 5-hydroxyl of shikimate-3-phosphate (S3P) to produce enolpyruvyl shikimate-3-phosphate and inorganic phosphate. The protein is 3-phosphoshikimate 1-carboxyvinyltransferase of Clostridium perfringens (strain 13 / Type A).